The following is a 57-amino-acid chain: Small ribosomal subunit protein eS27 (57 aa).

Residues cysteine 10, cysteine 13, cysteine 29, and cysteine 32 each contribute to the Zn(2+) site. Residues 10–32 (CDDCENEQVLFGKAANTVNCAVC) form a C4-type zinc finger.

This sequence belongs to the eukaryotic ribosomal protein eS27 family. In terms of assembly, part of the 30S ribosomal subunit. Zn(2+) is required as a cofactor.

This is Small ribosomal subunit protein eS27 from Natronomonas pharaonis (strain ATCC 35678 / DSM 2160 / CIP 103997 / JCM 8858 / NBRC 14720 / NCIMB 2260 / Gabara) (Halobacterium pharaonis).